Consider the following 94-residue polypeptide: Acylphosphatase (94 aa).

The Acylphosphatase-like domain maps to 5–94 (RLTAFVHGHV…PRDVEGFVER (90 aa)). Active-site residues include arginine 20 and asparagine 38.

Belongs to the acylphosphatase family.

It catalyses the reaction an acyl phosphate + H2O = a carboxylate + phosphate + H(+). The sequence is that of Acylphosphatase (acyP) from Corynebacterium glutamicum (strain ATCC 13032 / DSM 20300 / JCM 1318 / BCRC 11384 / CCUG 27702 / LMG 3730 / NBRC 12168 / NCIMB 10025 / NRRL B-2784 / 534).